Reading from the N-terminus, the 689-residue chain is Acyl-coenzyme A oxidase 1 (689 aa).

The FAD site is built by Thr-149 and Gly-188. Glu-444 functions as the Proton acceptor in the catalytic mechanism.

It belongs to the acyl-CoA oxidase family. As to quaternary structure, heteropentamer composed of five different subunits. FAD serves as cofactor.

The protein localises to the peroxisome. The catalysed reaction is a 2,3-saturated acyl-CoA + O2 = a (2E)-enoyl-CoA + H2O2. Its pathway is lipid metabolism; peroxisomal fatty acid beta-oxidation. The sequence is that of Acyl-coenzyme A oxidase 1 (POX1) from Yarrowia lipolytica (strain CLIB 122 / E 150) (Yeast).